The primary structure comprises 547 residues: Chaperonin GroEL (547 aa).

ATP-binding positions include 30–33, Lys51, 87–91, Gly416, 480–482, and Asp496; these read TLGP, DGTTT, and NAA.

This sequence belongs to the chaperonin (HSP60) family. As to quaternary structure, forms a cylinder of 14 subunits composed of two heptameric rings stacked back-to-back. Interacts with the co-chaperonin GroES.

Its subcellular location is the cytoplasm. It carries out the reaction ATP + H2O + a folded polypeptide = ADP + phosphate + an unfolded polypeptide.. In terms of biological role, together with its co-chaperonin GroES, plays an essential role in assisting protein folding. The GroEL-GroES system forms a nano-cage that allows encapsulation of the non-native substrate proteins and provides a physical environment optimized to promote and accelerate protein folding. This is Chaperonin GroEL from Pseudoalteromonas translucida (strain TAC 125).